We begin with the raw amino-acid sequence, 64 residues long: Alpha-conotoxin-like Ac1.1a (64 aa).

Residues 1–21 (MGMRMMFTLFLLVVLTTTVVS) form the signal peptide. Residues 22-47 (YPSDSASDGRDDEAKDERSDMYELKR) constitute a propeptide that is removed on maturation. Disulfide bonds link Cys-51–Cys-56 and Cys-52–Cys-62. The residue at position 62 (Cys-62) is a Cysteine amide.

It belongs to the conotoxin A superfamily. Expressed by the venom duct.

The protein resides in the secreted. Functionally, alpha-conotoxins act on postsynaptic membranes, they bind to the nicotinic acetylcholine receptors (nAChR) and thus inhibit them. This Conus achatinus (Little frog cone) protein is Alpha-conotoxin-like Ac1.1a.